The following is a 344-amino-acid chain: Cyanuric acid amidohydrolase (344 aa).

The RU A stretch occupies residues 1–91; sequence MTVVDIVKRT…ASAFVGTDRP (91 aa). Substrate contacts are provided by residues Arg-51 and 71–72; that span reads SG. Residues 97 to 232 form an RU B region; it reads ALVAAVGRTA…CHILVLGNSP (136 aa). Residue Lys-146 is part of the active site. Residues Arg-178 and 215–216 each bind substrate; that span reads SS. Ser-215 (nucleophile) is an active-site residue. The RU C stretch occupies residues 238-344; it reads LRAVHGVMRD…PVTVVYRVAS (107 aa). Mg(2+) is bound at residue Glu-276. Substrate contacts are provided by residues Arg-303 and 322 to 323; that span reads SG. Mg(2+) contacts are provided by Ala-325, Gln-328, Gly-329, Pro-330, and Gly-333.

This sequence belongs to the cyclic amide hydrolase (CyAH) family. Homotetramer.

It catalyses the reaction cyanurate + H2O = 1-carboxybiuret + H(+). Its pathway is xenobiotic degradation; atrazine degradation; biuret from cyanurate: step 1/1. With respect to regulation, inhibited by barbituric acid. Its function is as follows. Responsible for the hydrolysis of cyanuric acid, an intermediate formed during catabolism of s-triazine based compounds in herbicides such as atrazine and polymers such as melamine. Catalyzes the hydrolytic opening of the s-triazine ring of cyanuric acid (2,4,6-trihydroxy-s-triazine) to yield carbon dioxide and carboxybiuret, which spontaneously decarboxylates to biuret. This Pseudonocardia dioxanivorans (strain ATCC 55486 / DSM 44775 / JCM 13855 / CB1190) protein is Cyanuric acid amidohydrolase.